A 547-amino-acid polypeptide reads, in one-letter code: Cytochrome P450 monooxygenase oblB (547 aa).

The next 2 membrane-spanning stretches (helical) occupy residues 42-62 (GAVGAIYAIYISGLVIYRLFL) and 242-262 (FDMFHLGAVSLPLFMGMPWLI). N-linked (GlcNAc...) asparagine glycosylation occurs at asparagine 277. A helical membrane pass occupies residues 345–365 (VLIGSGTMTTAGTMGFLCYYI). Cysteine 489 contributes to the heme binding site.

It belongs to the cytochrome P450 family. It depends on heme as a cofactor.

The protein resides in the membrane. It carries out the reaction ophiobolin F + 4 reduced [NADPH--hemoprotein reductase] + 4 O2 = ophiobolin C + 4 oxidized [NADPH--hemoprotein reductase] + 6 H2O + 4 H(+). Its pathway is secondary metabolite biosynthesis; terpenoid biosynthesis. Its function is as follows. Cytochrome P450 monooxygenase; part of the gene cluster that mediates the biosynthesis of the sesterterpenes ophiobolins, fungal phytotoxins with potential anti-cancer activities. The first step of the pathway is performed by the sesterterpene synthase oblA that possesses both prenyl transferase and terpene cyclase activity, converting isopentenyl diphosphate and dimethylallyl diphosphate into geranylfarnesyl diphosphate (GFPP) and further converting GFPP into ophiobolin F, respectively. Other sesterterpenoids (C(25) terpenoids) are found as minor products of oblA. The cytochrome P450 monooxygenase oblB then catalyzes a four-step oxidative transformation of ophiobolin F to yield ophiobolin C. The function of the cytochrome P450 monooxygenase oblE has still to be determined. The polypeptide is Cytochrome P450 monooxygenase oblB (Emericella variicolor (Aspergillus stellatus)).